A 1188-amino-acid polypeptide reads, in one-letter code: DNA-directed RNA polymerase II subunit 2 (1188 aa).

D800 contributes to the Mg(2+) binding site. Disordered regions lie at residues 852 to 871 and 877 to 897; these read SYDKLDDDGLAPPGTRVSGE and KTTPISQDEAQGQSSRYTRRD. Residues 879–892 show a composition bias toward polar residues; it reads TPISQDEAQGQSSR. Positions 1124, 1127, 1142, and 1145 each coordinate Zn(2+). A C4-type zinc finger spans residues 1124–1145; that stretch reads CEVCGLIAIANLKKNSFECRGC.

Belongs to the RNA polymerase beta chain family. Component of the RNA polymerase II complex consisting of at least 12 subunits.

It localises to the nucleus. The enzyme catalyses RNA(n) + a ribonucleoside 5'-triphosphate = RNA(n+1) + diphosphate. Functionally, DNA-dependent RNA polymerase catalyzes the transcription of DNA into RNA using the four ribonucleoside triphosphates as substrates. Second largest component of RNA polymerase II which synthesizes mRNA precursors and many functional non-coding RNAs. Proposed to contribute to the polymerase catalytic activity and forms the polymerase active center together with the largest subunit. Pol II is the central component of the basal RNA polymerase II transcription machinery. It is composed of mobile elements that move relative to each other. NRPB2 is part of the core element with the central large cleft, the clamp element that moves to open and close the cleft and the jaws that are thought to grab the incoming DNA template. Its function is as follows. Essential for the completion of the three rounds of mitosis in female megaspores required for the development of mature gametophytes. The chain is DNA-directed RNA polymerase II subunit 2 (NRPB2) from Arabidopsis thaliana (Mouse-ear cress).